Here is a 535-residue protein sequence, read N- to C-terminus: MALPSLHEFPWLTTVIVYPVVAALFIPLIPAPAGDPTTRVYAQKLAERVRWFALFIAVTDLLILLAGFYVGYDPSQTSLQLLERYTWVPQVGLSWSVGADGLSMPLILLTAFVTTLAILAAWPVTLKPRLFYFLMLAMYGGQIGVFAVQDMLLFFLMWELELIPVYLLLSIWGGYNRLYAATKFILYTALSSLFILVAGLAMAFYGDPISFDMTDLAHKAYPLSFQLLLYGAFLIAYGVKLPVFPLHTWLPDAHGEATAPVHMLLAGILLKMGGYALMRMNVGMLPDAHLYFAPVLIVLGVVNIIFAALTSFAQRNLKRKIAYSSISHMGFVLIGIGSLTEIGMSGAMLQMISHGLIGASLFFLVGATYDRTHTLELEEMGGVGLKMPKIFSMFTACSLASLALPGMSGFVAELMVFIGMATTDAYSLPFRLVVVFLAAVGVILTPIYLLSMLRQIFFGPENKELTEHEELVDAEPREVFIIACLLIPIIGIGLYPKLVTSLYDQSTNALVALLRQELSSIGATVAQAPALYSAD.

The next 14 membrane-spanning stretches (helical) occupy residues 9 to 29 (FPWL…IPLI), 51 to 71 (WFAL…FYVG), 106 to 126 (LILL…PVTL), 130 to 150 (LFYF…AVQD), 152 to 172 (LLFF…LSIW), 184 to 204 (FILY…AMAF), 227 to 247 (LLLY…FPLH), 258 to 278 (TAPV…YALM), 290 to 310 (LYFA…AALT), 326 to 346 (ISHM…GMSG), 347 to 367 (AMLQ…LVGA), 399 to 419 (LASL…VFIG), 432 to 452 (LVVV…LLSM), and 479 to 499 (VFII…PKLV).

The protein belongs to the complex I subunit 4 family.

It is found in the cellular thylakoid membrane. It carries out the reaction a plastoquinone + NADH + (n+1) H(+)(in) = a plastoquinol + NAD(+) + n H(+)(out). The enzyme catalyses a plastoquinone + NADPH + (n+1) H(+)(in) = a plastoquinol + NADP(+) + n H(+)(out). In terms of biological role, NDH-1 shuttles electrons from NAD(P)H, via FMN and iron-sulfur (Fe-S) centers, to quinones in the respiratory chain. The immediate electron acceptor for the enzyme in this species is believed to be plastoquinone. Couples the redox reaction to proton translocation (for every two electrons transferred, four hydrogen ions are translocated across the cytoplasmic membrane), and thus conserves the redox energy in a proton gradient. The sequence is that of NAD(P)H-quinone oxidoreductase chain 4 2 from Synechococcus sp. (strain JA-3-3Ab) (Cyanobacteria bacterium Yellowstone A-Prime).